We begin with the raw amino-acid sequence, 208 residues long: ATP-dependent Clp protease proteolytic subunit (208 aa).

Serine 106 (nucleophile) is an active-site residue. Residue histidine 131 is part of the active site.

This sequence belongs to the peptidase S14 family. In terms of assembly, fourteen ClpP subunits assemble into 2 heptameric rings which stack back to back to give a disk-like structure with a central cavity, resembling the structure of eukaryotic proteasomes.

Its subcellular location is the cytoplasm. The catalysed reaction is Hydrolysis of proteins to small peptides in the presence of ATP and magnesium. alpha-casein is the usual test substrate. In the absence of ATP, only oligopeptides shorter than five residues are hydrolyzed (such as succinyl-Leu-Tyr-|-NHMec, and Leu-Tyr-Leu-|-Tyr-Trp, in which cleavage of the -Tyr-|-Leu- and -Tyr-|-Trp bonds also occurs).. Cleaves peptides in various proteins in a process that requires ATP hydrolysis. Has a chymotrypsin-like activity. Plays a major role in the degradation of misfolded proteins. This is ATP-dependent Clp protease proteolytic subunit from Caulobacter sp. (strain K31).